Consider the following 134-residue polypeptide: Probable 4-amino-4-deoxy-L-arabinose-phosphoundecaprenol flippase subunit ArnF (134 aa).

Residues 1-5 (MNRRR) lie on the Cytoplasmic side of the membrane. The helical transmembrane segment at 6–26 (GILFALASVLLVSVAQLSMRW) threads the bilayer. Residues 27 to 45 (SMTRLPRPDQWLSVPSVDS) are Periplasmic-facing. The helical transmembrane segment at 46–66 (VALAVVLAAIFAYALSMLCWL) threads the bilayer. Over 67-77 (AALRDLPLGRA) the chain is Cytoplasmic. A helical transmembrane segment spans residues 78–98 (YSLLSISYALVYLLAASLPLF). The Periplasmic portion of the chain corresponds to 99-101 (NES). Residues 102-122 (FSFSKSLGVALVMLGVITINT) traverse the membrane as a helical segment. Topologically, residues 123-134 (RPARAPELRSSP) are cytoplasmic.

The protein belongs to the ArnF family. Heterodimer of ArnE and ArnF.

Its subcellular location is the cell inner membrane. Its pathway is bacterial outer membrane biogenesis; lipopolysaccharide biosynthesis. Functionally, translocates 4-amino-4-deoxy-L-arabinose-phosphoundecaprenol (alpha-L-Ara4N-phosphoundecaprenol) from the cytoplasmic to the periplasmic side of the inner membrane. The protein is Probable 4-amino-4-deoxy-L-arabinose-phosphoundecaprenol flippase subunit ArnF of Pseudomonas fluorescens (strain Pf0-1).